A 99-amino-acid chain; its full sequence is UPF0235 protein PM1313 (99 aa).

The protein belongs to the UPF0235 family.

The sequence is that of UPF0235 protein PM1313 from Pasteurella multocida (strain Pm70).